The sequence spans 240 residues: Probable metal transport system ATP-binding protein TM_0124 (240 aa).

In terms of domain architecture, ABC transporter spans 4–223 (VEVKNLTYRI…LKKIFTDFDI (220 aa)). 36 to 43 (GPNGAGKT) contacts ATP.

Belongs to the ABC transporter superfamily.

Part of an ATP-driven transport system TM_0123/TM_0124/TM_0125 for a metal. Probably responsible for energy coupling to the transport system. This is Probable metal transport system ATP-binding protein TM_0124 from Thermotoga maritima (strain ATCC 43589 / DSM 3109 / JCM 10099 / NBRC 100826 / MSB8).